A 118-amino-acid polypeptide reads, in one-letter code: Ig heavy chain V region AC38 205.12 (118 aa).

A v segment region spans residues 1–98 (EVQLQQSGPE…EDSAVYYCAR (98 aa)). A disulfide bridge links Cys-22 with Cys-96. The segment at 99 to 104 (GYGYDP) is d segment. Residues 105–118 (FDVWGTGTTVTVSS) are j segment.

In Mus musculus (Mouse), this protein is Ig heavy chain V region AC38 205.12.